A 352-amino-acid polypeptide reads, in one-letter code: tRNA pseudouridine synthase D (352 aa).

The active-site Nucleophile is the Asp-81. Positions 157–303 (GVPNYFGGQR…MSHERRILRL (147 aa)) constitute a TRUD domain.

Belongs to the pseudouridine synthase TruD family.

The enzyme catalyses uridine(13) in tRNA = pseudouridine(13) in tRNA. Functionally, responsible for synthesis of pseudouridine from uracil-13 in transfer RNAs. This chain is tRNA pseudouridine synthase D, found in Pseudomonas putida (strain W619).